Consider the following 207-residue polypeptide: Adenylyl-sulfate kinase (207 aa).

39-46 (GLSGAGKS) contributes to the ATP binding site. Ser-113 (phosphoserine intermediate) is an active-site residue.

Belongs to the APS kinase family.

The enzyme catalyses adenosine 5'-phosphosulfate + ATP = 3'-phosphoadenylyl sulfate + ADP + H(+). It functions in the pathway sulfur metabolism; hydrogen sulfide biosynthesis; sulfite from sulfate: step 2/3. Catalyzes the synthesis of activated sulfate. This chain is Adenylyl-sulfate kinase, found in Vibrio vulnificus (strain CMCP6).